A 195-amino-acid polypeptide reads, in one-letter code: Phosphoheptose isomerase (195 aa).

The 160-residue stretch at 36–195 (LVDSLKGDGI…IIEKELFGLD (160 aa)) folds into the SIS domain. 51–53 (NGG) is a binding site for substrate. Residues His-60 and Glu-64 each coordinate Zn(2+). Residues Glu-64, 95–96 (ND), 121–123 (TTS), Ser-126, and Gln-173 each bind substrate. Residues Gln-173 and His-181 each coordinate Zn(2+).

The protein belongs to the SIS family. GmhA subfamily. Requires Zn(2+) as cofactor.

Its subcellular location is the cytoplasm. It carries out the reaction 2 D-sedoheptulose 7-phosphate = D-glycero-alpha-D-manno-heptose 7-phosphate + D-glycero-beta-D-manno-heptose 7-phosphate. It participates in carbohydrate biosynthesis; D-glycero-D-manno-heptose 7-phosphate biosynthesis; D-glycero-alpha-D-manno-heptose 7-phosphate and D-glycero-beta-D-manno-heptose 7-phosphate from sedoheptulose 7-phosphate: step 1/1. Its function is as follows. Catalyzes the isomerization of sedoheptulose 7-phosphate in D-glycero-D-manno-heptose 7-phosphate. The sequence is that of Phosphoheptose isomerase from Leptospira biflexa serovar Patoc (strain Patoc 1 / Ames).